The sequence spans 306 residues: D-alanine--D-alanine ligase (306 aa).

In terms of domain architecture, ATP-grasp spans 105 to 300; it reads KMIWQAAGIS…FDELVIQILE (196 aa). Residue 131–186 coordinates ATP; it reads TDRLGLPLIIKPAREGSTIGLNKVDYAQDMQSAYQTAAQHDSLVIAEQFIQGIELT. 3 residues coordinate Mg(2+): Asp254, Glu267, and Asn269.

This sequence belongs to the D-alanine--D-alanine ligase family. Mg(2+) serves as cofactor. It depends on Mn(2+) as a cofactor.

The protein resides in the cytoplasm. It catalyses the reaction 2 D-alanine + ATP = D-alanyl-D-alanine + ADP + phosphate + H(+). The protein operates within cell wall biogenesis; peptidoglycan biosynthesis. Cell wall formation. The chain is D-alanine--D-alanine ligase from Nitrosomonas eutropha (strain DSM 101675 / C91 / Nm57).